Consider the following 394-residue polypeptide: Putative pectate lyase 17 (394 aa).

An N-terminal signal peptide occupies residues 1-22; sequence MTHFTVSCLLVALFLCQSLVHA. Ca(2+)-binding residues include Asp192, Asp216, and Asp220. Residue Arg272 is part of the active site.

It belongs to the polysaccharide lyase 1 family. Requires Ca(2+) as cofactor.

The enzyme catalyses Eliminative cleavage of (1-&gt;4)-alpha-D-galacturonan to give oligosaccharides with 4-deoxy-alpha-D-galact-4-enuronosyl groups at their non-reducing ends.. The protein operates within glycan metabolism; pectin degradation; 2-dehydro-3-deoxy-D-gluconate from pectin: step 2/5. In Arabidopsis thaliana (Mouse-ear cress), this protein is Putative pectate lyase 17.